The sequence spans 220 residues: Thiopurine S-methyltransferase (220 aa).

Residues Trp10, Leu45, Glu66, and Arg123 each contribute to the S-adenosyl-L-methionine site.

This sequence belongs to the class I-like SAM-binding methyltransferase superfamily. TPMT family.

The protein resides in the cytoplasm. The enzyme catalyses S-adenosyl-L-methionine + a thiopurine = S-adenosyl-L-homocysteine + a thiopurine S-methylether.. In Nitrosospira multiformis (strain ATCC 25196 / NCIMB 11849 / C 71), this protein is Thiopurine S-methyltransferase.